Reading from the N-terminus, the 659-residue chain is UvrABC system protein B (659 aa).

Residues 25-182 enclose the Helicase ATP-binding domain; that stretch reads QSIENGNRGQ…KKLIEIQYER (158 aa). Position 38-45 (38-45) interacts with ATP; that stretch reads GVTGSGKT. The Beta-hairpin signature appears at 91–114; it reads YYDYYQPEAYVPQTDTFIEKDASI. The Helicase C-terminal domain maps to 429 to 582; that stretch reads QIDDLYGEIQ…QMEYNEEHNI (154 aa). A UVR domain is found at 622–657; the sequence is EKLIEQYEEEMKEAAKNLQFERAAELRDIIKDLKEN.

It belongs to the UvrB family. In terms of assembly, forms a heterotetramer with UvrA during the search for lesions. Interacts with UvrC in an incision complex.

It is found in the cytoplasm. Its function is as follows. The UvrABC repair system catalyzes the recognition and processing of DNA lesions. A damage recognition complex composed of 2 UvrA and 2 UvrB subunits scans DNA for abnormalities. Upon binding of the UvrA(2)B(2) complex to a putative damaged site, the DNA wraps around one UvrB monomer. DNA wrap is dependent on ATP binding by UvrB and probably causes local melting of the DNA helix, facilitating insertion of UvrB beta-hairpin between the DNA strands. Then UvrB probes one DNA strand for the presence of a lesion. If a lesion is found the UvrA subunits dissociate and the UvrB-DNA preincision complex is formed. This complex is subsequently bound by UvrC and the second UvrB is released. If no lesion is found, the DNA wraps around the other UvrB subunit that will check the other stand for damage. This chain is UvrABC system protein B, found in Clostridium perfringens (strain ATCC 13124 / DSM 756 / JCM 1290 / NCIMB 6125 / NCTC 8237 / Type A).